A 146-amino-acid chain; its full sequence is Transcriptional repressor NrdR (146 aa).

Residues 3 to 34 (CPFCQNPDTKVIDTRISDDGHSIRRRRVCPKC) fold into a zinc finger. Positions 46 to 136 (LLVTKRSGGV…VYQNFAGLED (91 aa)) constitute an ATP-cone domain.

It belongs to the NrdR family. Zn(2+) is required as a cofactor.

Functionally, negatively regulates transcription of bacterial ribonucleotide reductase nrd genes and operons by binding to NrdR-boxes. In Bifidobacterium longum (strain NCC 2705), this protein is Transcriptional repressor NrdR.